Here is a 214-residue protein sequence, read N- to C-terminus: Thiamine-phosphate synthase (214 aa).

4-amino-2-methyl-5-(diphosphooxymethyl)pyrimidine is bound by residues 37 to 41 (QYREK) and Asn-73. Residues Asp-74 and Asp-93 each coordinate Mg(2+). Residue Ser-112 coordinates 4-amino-2-methyl-5-(diphosphooxymethyl)pyrimidine. 139–141 (TIS) is a 2-[(2R,5Z)-2-carboxy-4-methylthiazol-5(2H)-ylidene]ethyl phosphate binding site. Residue Lys-142 coordinates 4-amino-2-methyl-5-(diphosphooxymethyl)pyrimidine. 2-[(2R,5Z)-2-carboxy-4-methylthiazol-5(2H)-ylidene]ethyl phosphate-binding positions include Gly-171 and 191–192 (IS).

The protein belongs to the thiamine-phosphate synthase family. Mg(2+) is required as a cofactor.

The catalysed reaction is 2-[(2R,5Z)-2-carboxy-4-methylthiazol-5(2H)-ylidene]ethyl phosphate + 4-amino-2-methyl-5-(diphosphooxymethyl)pyrimidine + 2 H(+) = thiamine phosphate + CO2 + diphosphate. The enzyme catalyses 2-(2-carboxy-4-methylthiazol-5-yl)ethyl phosphate + 4-amino-2-methyl-5-(diphosphooxymethyl)pyrimidine + 2 H(+) = thiamine phosphate + CO2 + diphosphate. It catalyses the reaction 4-methyl-5-(2-phosphooxyethyl)-thiazole + 4-amino-2-methyl-5-(diphosphooxymethyl)pyrimidine + H(+) = thiamine phosphate + diphosphate. It functions in the pathway cofactor biosynthesis; thiamine diphosphate biosynthesis; thiamine phosphate from 4-amino-2-methyl-5-diphosphomethylpyrimidine and 4-methyl-5-(2-phosphoethyl)-thiazole: step 1/1. In terms of biological role, condenses 4-methyl-5-(beta-hydroxyethyl)thiazole monophosphate (THZ-P) and 2-methyl-4-amino-5-hydroxymethyl pyrimidine pyrophosphate (HMP-PP) to form thiamine monophosphate (TMP). This chain is Thiamine-phosphate synthase, found in Listeria innocua serovar 6a (strain ATCC BAA-680 / CLIP 11262).